The following is a 514-amino-acid chain: Peptide chain release factor 3 (514 aa).

The tr-type G domain occupies 8 to 268 (KKRRTFAIIS…IFLKFAPEPH (261 aa)). GTP contacts are provided by residues 17–24 (SHPDAGKT), 85–89 (DTPGH), and 139–142 (NKLD).

Belongs to the TRAFAC class translation factor GTPase superfamily. Classic translation factor GTPase family. PrfC subfamily.

It is found in the cytoplasm. Its function is as follows. Increases the formation of ribosomal termination complexes and stimulates activities of RF-1 and RF-2. It binds guanine nucleotides and has strong preference for UGA stop codons. It may interact directly with the ribosome. The stimulation of RF-1 and RF-2 is significantly reduced by GTP and GDP, but not by GMP. The sequence is that of Peptide chain release factor 3 from Streptococcus pneumoniae serotype 2 (strain D39 / NCTC 7466).